Consider the following 370-residue polypeptide: Peptidyl-prolyl cis-trans isomerase D (370 aa).

A Phosphoserine modification is found at S5. The PPIase cyclophilin-type domain occupies 19–183; that stretch reads FFDVDIGGER…KLCVIAECGE (165 aa). K171 carries the N6-acetyllysine modification. Residues 185-215 are chaperone activity; the sequence is KEGDDWGIFPKDGSGDSHPDFPEDADIDLKD. At S198 the chain carries Phosphoserine. The interaction with HSP90AB1 stretch occupies residues 214–370; it reads KDVDKILLIS…EKAVYAKMFA (157 aa). TPR repeat units follow at residues 223-256, 273-306, and 307-340; these read SEDLKNIGNTFFKSQNWEMAIKKYAKVLRYVDSS, LSCVLNIGACKLKMSNWQGAIDSCLEALEMDPSN, and TKALYRKAQGWQGLKEYDQALADLKKAQEIAPGD.

Belongs to the cyclophilin-type PPIase family. PPIase D subfamily. In terms of assembly, identified in ESR1 or NR3C1/GCR steroid receptor-chaperone complexes. Found in HSP90 chaperone complexes with kinase clients LCK or EIF2AK1. Two monomers associate with one HSP90 homodimer. Interacts with HSP90AA1. Interacts with HSP90AB1; PPID and FKBP4 compete for binding to HSP90AB1 and the interaction is mutually exclusive with the PPID:HSPA8 interaction. Interacts with HSPA8; PPID and STIP1 but not FKBP4 compete for binding to HSPA8 and the interaction is mutually exclusive with the PPID:HSP90AB1 interaction. Interacts with S100A1 and S100A2; the interactions dissociate the PPID:HSP90AA1 interaction. Interacts with S100A6. Interacts with MYB, ILF2, XRCC6, RACK1 and RPS3. Interacts with cytoplasmic dynein 1 intermediate chain (DYNC1I1 or DYNC1I2).

It is found in the cytoplasm. The protein resides in the nucleus. Its subcellular location is the nucleolus. It localises to the nucleoplasm. It carries out the reaction [protein]-peptidylproline (omega=180) = [protein]-peptidylproline (omega=0). With respect to regulation, less sensitive to inhibition by cyclosporin A than is CYP-18. Its function is as follows. PPIase that catalyzes the cis-trans isomerization of proline imidic peptide bonds in oligopeptides and may therefore assist protein folding. Proposed to act as a co-chaperone in HSP90 complexes such as in unligated steroid receptors heterocomplexes. Different co-chaperones seem to compete for association with HSP90 thus establishing distinct HSP90-co-chaperone-receptor complexes with the potential to exert tissue-specific receptor activity control. May have a preference for estrogen receptor complexes and is not found in glucocorticoid receptor complexes. May be involved in cytoplasmic dynein-dependent movement of the receptor from the cytoplasm to the nucleus. May regulate MYB by inhibiting its DNA-binding activity. Involved in regulation of AHR signaling by promoting the formation of the AHR:ARNT dimer; the function is independent of HSP90 but requires the chaperone activity region. Involved in regulation of UV radiation-induced apoptosis. This is Peptidyl-prolyl cis-trans isomerase D from Mus musculus (Mouse).